A 416-amino-acid chain; its full sequence is Enterobactin exporter EntS (416 aa).

At 1–21 (MNKQSWLLNLSLLKTHPAFRA) the chain is on the cytoplasmic side. The chain crosses the membrane as a helical span at residues 22–42 (VFLARFISIVSLGLLGVAVPV). The Periplasmic portion of the chain corresponds to 43–55 (QIQMMTHSTWQVG). The chain crosses the membrane as a helical span at residues 56–76 (LSVTLTGGAMFVGLMVGGVLA). Residues 77–83 (DRYERKK) are Cytoplasmic-facing. Residues 84–104 (VILLARGTCGIGFIGLCLNAL) traverse the membrane as a helical segment. The Periplasmic segment spans residues 105 to 109 (LPEPS). The chain crosses the membrane as a helical span at residues 110–130 (LLAIYLLGLWDGFFASLGVTA). Topologically, residues 131-156 (LLAATPALVGRENLMQAGAITMLTVR) are cytoplasmic. Residues 157 to 177 (LGSVISPMIGGLLLATGGVAW) form a helical membrane-spanning segment. Residue asparagine 178 is a topological domain, periplasmic. Residues 179–199 (YGLAAAGTFITLLPLLSLPAL) form a helical membrane-spanning segment. The Cytoplasmic segment spans residues 200 to 218 (PPPPQPREHPLKSLLAGFR). The chain crosses the membrane as a helical span at residues 219 to 239 (FLLASPLVGGIALLGGLLTMA). Residues 240 to 256 (SAVRVLYPALADNWQMS) are Periplasmic-facing. A helical membrane pass occupies residues 257–277 (AAQIGFLYAAIPLGAAIGALT). Over 278-287 (SGKLAHSARP) the chain is Cytoplasmic. Residues 288–307 (GLLMLLSTLGSFLAIGLFGL) traverse the membrane as a helical segment. The Periplasmic portion of the chain corresponds to 308-313 (MPMWIL). A helical transmembrane segment spans residues 314 to 336 (GVVCLALFGWLSAVSSLLQYTML). The Cytoplasmic segment spans residues 337 to 356 (QTQTPEAMLGRINGLWTAQN). The chain crosses the membrane as a helical span at residues 357 to 377 (VTGDAIGAALLGGLGAMMTPV). Position 378 (alanine 378) is a topological domain, periplasmic. A helical membrane pass occupies residues 379–399 (SASASGFGLLIIGVLLLLVLV). Over 400–416 (ELRRFRQTPPQVTASDG) the chain is Cytoplasmic.

It belongs to the major facilitator superfamily. EntS (TC 2.A.1.38) family.

It is found in the cell inner membrane. Functionally, component of an export pathway for enterobactin. This chain is Enterobactin exporter EntS, found in Escherichia coli O157:H7.